The following is a 172-amino-acid chain: Shikimate kinase 2 (172 aa).

Gly9–Thr16 provides a ligand contact to ATP.

The protein belongs to the shikimate kinase family.

It is found in the cytoplasm. The catalysed reaction is shikimate + ATP = 3-phosphoshikimate + ADP + H(+). It functions in the pathway metabolic intermediate biosynthesis; chorismate biosynthesis; chorismate from D-erythrose 4-phosphate and phosphoenolpyruvate: step 5/7. The protein is Shikimate kinase 2 of Syntrophotalea carbinolica (strain DSM 2380 / NBRC 103641 / GraBd1) (Pelobacter carbinolicus).